The primary structure comprises 109 residues: Nucleoid-associated protein YbaB (109 aa).

The protein belongs to the YbaB/EbfC family. Homodimer.

It is found in the cytoplasm. It localises to the nucleoid. In terms of biological role, binds to DNA and alters its conformation. May be involved in regulation of gene expression, nucleoid organization and DNA protection. The polypeptide is Nucleoid-associated protein YbaB (Escherichia coli O8 (strain IAI1)).